The primary structure comprises 914 residues: Trafficking kinesin-binding protein 2 (914 aa).

Residues 1 to 21 (MSQSQNAIFTSPTGEENLMNS) are compositionally biased toward polar residues. The disordered stretch occupies residues 1–30 (MSQSQNAIFTSPTGEENLMNSNHRDSESIT). Residues 48–353 (EEQLPQYRLK…QEEIKELRSR (306 aa)) enclose the HAP1 N-terminal domain. The stretch at 134-354 (QALLKRNHVL…EEIKELRSRS (221 aa)) forms a coiled coil. Positions 359–509 (HLYFSQSYGA…KQFFAEEWQR (151 aa)) are interaction with HGS. At Ser-420 the chain carries Phosphoserine. Disordered regions lie at residues 447–482 (QQTE…DSDL) and 765–787 (QPLP…SPCP). A compositionally biased stretch (polar residues) spans 454–471 (LLNQGSSSEEVAGSSQKM). Over residues 775–787 (STPPNSPSHSPCP) the composition is skewed to pro residues.

It belongs to the milton family. In terms of assembly, interacts with GABA-A receptor and O-GlcNAc transferase. Interacts with HGS. Interacts with RHOT1/Miro-1 and RHOT2/Miro-2. O-glycosylated. As to expression, widely expressed, with highest expression in heart.

The protein localises to the cytoplasm. It is found in the early endosome. Its subcellular location is the mitochondrion. Functionally, may regulate endosome-to-lysosome trafficking of membrane cargo, including EGFR. This chain is Trafficking kinesin-binding protein 2 (TRAK2), found in Homo sapiens (Human).